Reading from the N-terminus, the 240-residue chain is Uridylate kinase (240 aa).

12–15 is an ATP binding site; it reads KLSG. The tract at residues 20 to 25 is involved in allosteric activation by GTP; it reads GEKGFG. Residue G54 participates in UMP binding. Residues G55 and R59 each coordinate ATP. UMP-binding positions include D74 and 135–142; that span reads TGSPYFST. Residues N163, Y169, and D172 each coordinate ATP.

It belongs to the UMP kinase family. In terms of assembly, homohexamer.

The protein resides in the cytoplasm. It carries out the reaction UMP + ATP = UDP + ADP. It functions in the pathway pyrimidine metabolism; CTP biosynthesis via de novo pathway; UDP from UMP (UMPK route): step 1/1. With respect to regulation, allosterically activated by GTP. Inhibited by UTP. Catalyzes the reversible phosphorylation of UMP to UDP. The chain is Uridylate kinase from Limosilactobacillus reuteri (Lactobacillus reuteri).